Consider the following 133-residue polypeptide: MAKEFGRPQRVAQEMQKEIAIILQREIKDPRVGLMTTVSGVEVSRDLAYAKVFVTFLNDKDEAAVKAGIKALQDASGFIRSLLGKAMRLRIVPELTFFYDNSLVEGMRMSNLVTSVVKHDEERRVNPDDDKEE.

It belongs to the RbfA family. As to quaternary structure, monomer. Binds 30S ribosomal subunits, but not 50S ribosomal subunits or 70S ribosomes.

It is found in the cytoplasm. In terms of biological role, one of several proteins that assist in the late maturation steps of the functional core of the 30S ribosomal subunit. Associates with free 30S ribosomal subunits (but not with 30S subunits that are part of 70S ribosomes or polysomes). Required for efficient processing of 16S rRNA. May interact with the 5'-terminal helix region of 16S rRNA. In Cronobacter sakazakii (strain ATCC BAA-894) (Enterobacter sakazakii), this protein is Ribosome-binding factor A.